The chain runs to 219 residues: Ribonuclease T (219 aa).

The Exonuclease domain maps to 20–194; that stretch reads VVIDIETAGF…YDSLQTANLF (175 aa). 4 residues coordinate Mg(2+): Asp-23, Glu-25, His-181, and Asp-186. His-181 acts as the Proton donor/acceptor in catalysis.

The protein belongs to the RNase T family. Homodimer. Mg(2+) is required as a cofactor.

In terms of biological role, trims short 3' overhangs of a variety of RNA species, leaving a one or two nucleotide 3' overhang. Responsible for the end-turnover of tRNA: specifically removes the terminal AMP residue from uncharged tRNA (tRNA-C-C-A). Also appears to be involved in tRNA biosynthesis. This Buchnera aphidicola subsp. Schizaphis graminum (strain Sg) protein is Ribonuclease T.